A 95-amino-acid polypeptide reads, in one-letter code: Protein TusB (95 aa).

Belongs to the DsrH/TusB family. In terms of assembly, heterohexamer, formed by a dimer of trimers. The hexameric TusBCD complex contains 2 copies each of TusB, TusC and TusD. The TusBCD complex interacts with TusE.

The protein resides in the cytoplasm. In terms of biological role, part of a sulfur-relay system required for 2-thiolation of 5-methylaminomethyl-2-thiouridine (mnm(5)s(2)U) at tRNA wobble positions. The sequence is that of Protein TusB from Cronobacter sakazakii (strain ATCC BAA-894) (Enterobacter sakazakii).